Here is a 25-residue protein sequence, read N- to C-terminus: Chrysophsin-2 (25 aa).

His25 bears the Histidine amide mark.

Gill.

The protein localises to the secreted. Functionally, has antibacterial activity against Gram-positive bacteria B.subtilis ATCC 6633, L.garvieae ATCC 49156 and S.iniae F-8502, and Gram-negative bacteria E.coli WT-2, V.anguillarum ATCC 19264, V.penaeicida KHA, V.harveyi ATCC 14126, V.vulnificus ATCC 33148 and A.salmonicida NCMB 1102. Has hemolytic activity against human red blood cells. Seems to disrupt the membranes by adopting an alpha helical conformation. May play a significant role in innate host defense. The protein is Chrysophsin-2 of Pagrus major (Red sea bream).